A 545-amino-acid polypeptide reads, in one-letter code: Chaperonin GroEL (545 aa).

ATP is bound by residues 30–33, Lys51, 87–91, Gly415, and Asp494; these read TMGP and DGTTT.

Belongs to the chaperonin (HSP60) family. In terms of assembly, forms a cylinder of 14 subunits composed of two heptameric rings stacked back-to-back. Interacts with the co-chaperonin GroES.

The protein localises to the cytoplasm. It catalyses the reaction ATP + H2O + a folded polypeptide = ADP + phosphate + an unfolded polypeptide.. Together with its co-chaperonin GroES, plays an essential role in assisting protein folding. The GroEL-GroES system forms a nano-cage that allows encapsulation of the non-native substrate proteins and provides a physical environment optimized to promote and accelerate protein folding. In Helicobacter hepaticus (strain ATCC 51449 / 3B1), this protein is Chaperonin GroEL.